The following is a 92-amino-acid chain: MSREQAFEMLIKILCKTDSTDDMKLILECILTRSEMEDLIDRIRIYNELLNTNNSQREVASKLGVSITKITRGAANLQDNNIKDFLRKKISY.

The DNA-binding element occupies 56 to 78; sequence QREVASKLGVSITKITRGAANLQ.

The protein belongs to the TrpR family. As to quaternary structure, homodimer.

It is found in the cytoplasm. This protein is an aporepressor. When complexed with L-tryptophan it binds the operator region of the trp operon and prevents the initiation of transcription. This Xylella fastidiosa (strain 9a5c) protein is Trp operon repressor homolog (trpR).